We begin with the raw amino-acid sequence, 91 residues long: MPRSLKKGPFIDLHLLKKIEVAAEKNDRKPIKTWSRRSMILPQMVGLTIAVHNGRQHVPVLVNEDMVGHKLGEFAGTRNYRGHVADKKAKR.

This sequence belongs to the universal ribosomal protein uS19 family.

Protein S19 forms a complex with S13 that binds strongly to the 16S ribosomal RNA. This Pseudomonas fluorescens (strain Pf0-1) protein is Small ribosomal subunit protein uS19.